A 1113-amino-acid polypeptide reads, in one-letter code: Cytospin-A (1113 aa).

The tract at residues 1–160 is disordered; sequence MKKSVRPAAS…KSKSDGQISD (160 aa). Positions 59 to 103 are enriched in polar residues; it reads ASCNAVSKSKRTTSVGTTASTLDSKPKTASGTTSKRLASSLSKET. The span at 145-154 shows a compositional bias: basic and acidic residues; that stretch reads SEGRMSKSKS. Positions 220-259 form a coiled coil; the sequence is AADVESTLILLQEQNQAIREELNLLKSENRMLKDRLNALG. The disordered stretch occupies residues 284 to 374; that stretch reads AGSGQSDGGG…RRGSSGNASE (91 aa). The span at 338-358 shows a compositional bias: low complexity; it reads SSDDALDAPSGASSSSESECA. 2 coiled-coil regions span residues 379-433 and 473-791; these read CLTE…MDSL and MELE…RGRV. 4 disordered regions span residues 766–785, 832–902, 914–957, and 972–997; these read QEKN…RKQD, FDSA…PTYP, GSAA…DGAS, and ALAS…RKDP. The span at 834–845 shows a compositional bias: low complexity; that stretch reads SASQGPPSSGAS. The segment covering 856 to 867 has biased composition (pro residues); the sequence is PRTPLSPSPMKT. Over residues 925–940 the composition is skewed to polar residues; sequence QRVSNMDSTKAISVSR. Basic and acidic residues predominate over residues 941–951; sequence RSSEEMKRDMA. Positions 972–981 are enriched in low complexity; the sequence is ALASSSPTAS. One can recognise a Calponin-homology (CH) domain in the interval 1007–1112; that stretch reads GSKRNALLKW…YVTAIYKYFE (106 aa).

This sequence belongs to the cytospin-A family. In terms of assembly, may interact with both microtubules and actin cytoskeleton.

It is found in the cytoplasm. It localises to the cytoskeleton. The protein resides in the spindle. Its subcellular location is the cell junction. The protein localises to the gap junction. Involved in cytokinesis and spindle organization. May play a role in actin cytoskeleton organization and microtubule stabilization and hence required for proper cell adhesion and migration. The protein is Cytospin-A (specc1l) of Tetraodon nigroviridis (Spotted green pufferfish).